Reading from the N-terminus, the 491-residue chain is UDP-N-acetylmuramate--L-alanine ligase (491 aa).

126 to 132 (GTHGKTT) is a binding site for ATP.

This sequence belongs to the MurCDEF family.

The protein resides in the cytoplasm. It carries out the reaction UDP-N-acetyl-alpha-D-muramate + L-alanine + ATP = UDP-N-acetyl-alpha-D-muramoyl-L-alanine + ADP + phosphate + H(+). Its pathway is cell wall biogenesis; peptidoglycan biosynthesis. In terms of biological role, cell wall formation. The sequence is that of UDP-N-acetylmuramate--L-alanine ligase from Salmonella paratyphi C (strain RKS4594).